A 531-amino-acid polypeptide reads, in one-letter code: PHD finger protein 21B (531 aa).

Disordered stretches follow at residues Pro-79–Gln-99, Ser-184–Pro-222, Val-238–Glu-277, and Glu-295–Ser-314. Positions Lys-265–Glu-277 are enriched in basic and acidic residues. The PHD-type zinc finger occupies Asp-352 to Lys-399. Positions Lys-423–Lys-465 form a coiled coil. Positions Leu-507–Asn-531 are disordered. Over residues Pro-522–Asn-531 the composition is skewed to polar residues.

In Homo sapiens (Human), this protein is PHD finger protein 21B (PHF21B).